Consider the following 369-residue polypeptide: Peptide chain release factor 2 (369 aa).

Q251 is modified (N5-methylglutamine).

It belongs to the prokaryotic/mitochondrial release factor family. Methylated by PrmC. Methylation increases the termination efficiency of RF2.

The protein localises to the cytoplasm. Functionally, peptide chain release factor 2 directs the termination of translation in response to the peptide chain termination codons UGA and UAA. This Acidothermus cellulolyticus (strain ATCC 43068 / DSM 8971 / 11B) protein is Peptide chain release factor 2.